Consider the following 54-residue polypeptide: Phorbol-12-myristate-13-acetate-induced protein 1 (54 aa).

The BH3 motif lies at 29-37 (LRRFGDKLN). Residues 41-50 (KLLNLISKLF) form a required for mitochondrial location region.

This sequence belongs to the PMAIP1 family. In terms of assembly, interacts with MCL1. Interacts with BCL2A1. Interacts with BAX. Interacts with BCL2L10. In terms of tissue distribution, highly expressed in adult T-cell leukemia cell line.

The protein resides in the mitochondrion. In terms of biological role, promotes activation of caspases and apoptosis. Promotes mitochondrial membrane changes and efflux of apoptogenic proteins from the mitochondria. Contributes to p53/TP53-dependent apoptosis after radiation exposure. Promotes proteasomal degradation of MCL1. Competes with BAK1 for binding to MCL1 and can displace BAK1 from its binding site on MCL1. Competes with BIM/BCL2L11 for binding to MCL1 and can displace BIM/BCL2L11 from its binding site on MCL1. The polypeptide is Phorbol-12-myristate-13-acetate-induced protein 1 (PMAIP1) (Homo sapiens (Human)).